The chain runs to 475 residues: Ribulose bisphosphate carboxylase large chain (475 aa).

The propeptide occupies 1 to 2; it reads MS. The residue at position 3 (Pro3) is an N-acetylproline. Position 14 is an N6,N6,N6-trimethyllysine (Lys14). Residues Asn123 and Thr173 each coordinate substrate. Lys175 (proton acceptor) is an active-site residue. Residue Lys177 coordinates substrate. Mg(2+)-binding residues include Lys201, Asp203, and Glu204. N6-carboxylysine is present on Lys201. His294 serves as the catalytic Proton acceptor. The substrate site is built by Arg295, His327, and Ser379.

The protein belongs to the RuBisCO large chain family. Type I subfamily. As to quaternary structure, heterohexadecamer of 8 large chains and 8 small chains; disulfide-linked. The disulfide link is formed within the large subunit homodimers. Requires Mg(2+) as cofactor. In terms of processing, the disulfide bond which can form in the large chain dimeric partners within the hexadecamer appears to be associated with oxidative stress and protein turnover.

It localises to the plastid. The protein resides in the chloroplast. The enzyme catalyses 2 (2R)-3-phosphoglycerate + 2 H(+) = D-ribulose 1,5-bisphosphate + CO2 + H2O. It catalyses the reaction D-ribulose 1,5-bisphosphate + O2 = 2-phosphoglycolate + (2R)-3-phosphoglycerate + 2 H(+). In terms of biological role, ruBisCO catalyzes two reactions: the carboxylation of D-ribulose 1,5-bisphosphate, the primary event in carbon dioxide fixation, as well as the oxidative fragmentation of the pentose substrate in the photorespiration process. Both reactions occur simultaneously and in competition at the same active site. The chain is Ribulose bisphosphate carboxylase large chain from Piper cenocladum (Ant piper).